We begin with the raw amino-acid sequence, 539 residues long: Glycerol kinase (539 aa).

Residue Thr-49 coordinates ADP. The ATP site is built by Thr-49, Thr-50, and Ser-51. Position 49 (Thr-49) interacts with sn-glycerol 3-phosphate. An ADP-binding site is contributed by Arg-53. Residues Arg-119, Glu-120, Tyr-171, and Asp-280 each coordinate sn-glycerol 3-phosphate. Glycerol-binding residues include Arg-119, Glu-120, Tyr-171, Asp-280, and Gln-281. ADP contacts are provided by Thr-302 and Gly-345. ATP is bound by residues Thr-302, Gly-345, Gln-349, and Gly-446. ADP is bound by residues Gly-446 and Asn-450.

Belongs to the FGGY kinase family.

The enzyme catalyses glycerol + ATP = sn-glycerol 3-phosphate + ADP + H(+). Its pathway is polyol metabolism; glycerol degradation via glycerol kinase pathway; sn-glycerol 3-phosphate from glycerol: step 1/1. Its activity is regulated as follows. Inhibited by fructose 1,6-bisphosphate (FBP). Key enzyme in the regulation of glycerol uptake and metabolism. Catalyzes the phosphorylation of glycerol to yield sn-glycerol 3-phosphate. This is Glycerol kinase from Rhodopirellula baltica (strain DSM 10527 / NCIMB 13988 / SH1).